A 284-amino-acid chain; its full sequence is Pantothenate synthetase (284 aa).

Met-30–His-37 provides a ligand contact to ATP. Catalysis depends on His-37, which acts as the Proton donor. Gln-61 contacts (R)-pantoate. A beta-alanine-binding site is contributed by Gln-61. Gly-149–Asp-152 provides a ligand contact to ATP. Gln-155 lines the (R)-pantoate pocket. Residues Val-178 and Leu-186–Arg-189 contribute to the ATP site.

This sequence belongs to the pantothenate synthetase family. Homodimer.

Its subcellular location is the cytoplasm. It catalyses the reaction (R)-pantoate + beta-alanine + ATP = (R)-pantothenate + AMP + diphosphate + H(+). It functions in the pathway cofactor biosynthesis; (R)-pantothenate biosynthesis; (R)-pantothenate from (R)-pantoate and beta-alanine: step 1/1. Catalyzes the condensation of pantoate with beta-alanine in an ATP-dependent reaction via a pantoyl-adenylate intermediate. This is Pantothenate synthetase from Enterobacter sp. (strain 638).